Here is a 581-residue protein sequence, read N- to C-terminus: Proline--tRNA ligase (581 aa).

Belongs to the class-II aminoacyl-tRNA synthetase family. ProS type 1 subfamily. Homodimer.

Its subcellular location is the cytoplasm. It carries out the reaction tRNA(Pro) + L-proline + ATP = L-prolyl-tRNA(Pro) + AMP + diphosphate. Catalyzes the attachment of proline to tRNA(Pro) in a two-step reaction: proline is first activated by ATP to form Pro-AMP and then transferred to the acceptor end of tRNA(Pro). As ProRS can inadvertently accommodate and process non-cognate amino acids such as alanine and cysteine, to avoid such errors it has two additional distinct editing activities against alanine. One activity is designated as 'pretransfer' editing and involves the tRNA(Pro)-independent hydrolysis of activated Ala-AMP. The other activity is designated 'posttransfer' editing and involves deacylation of mischarged Ala-tRNA(Pro). The misacylated Cys-tRNA(Pro) is not edited by ProRS. The sequence is that of Proline--tRNA ligase from Methylibium petroleiphilum (strain ATCC BAA-1232 / LMG 22953 / PM1).